The chain runs to 465 residues: MTTIKLHNTRTRTKEEFVPIDPDNVRMYVCGPTVYDRAHLGNGRPVVVFDVLYRLLRHVYGADHVTYVRNFTDVDDKINARAAERGRPIGDITAETTQWFLDDMGALGALEPDHMPRATQYIPQMVAMIEELVAKGHAYEAEGHVLFAVDSWKEHYGKLSGRSVDDMIAGARVEVAPYKKNPMDFVLWKPSTPDLPGWDSPWGRGRPGWHIECSAMSYELLGESFDIHGGGNDLMFPHHENEIAQSCCAHPEGHFANFWLHNEMLQVEGKKMSKSLGNFFTVRDLLDQGIPGEVIRFVFLSTHYRKPMDWTEKKAKEAEATLRKWWRLTAPLDEMEIKPSPQFIDALTDDLNTPGAIAELHRLAKEKDYAALEAGLEMLGLQETVNFGVASFGFSTSVEVLEAANDLARRWMAYRDAKNFEEADRLKKSALLAGVDLSVSKEGGIQVPSATINGSPTVDELEALK.

Residue C30 coordinates Zn(2+). The 'HIGH' region signature appears at 32–42; the sequence is PTVYDRAHLGN. Residues C213, H238, and E242 each coordinate Zn(2+). The short motif at 271-275 is the 'KMSKS' region element; sequence KMSKS. Residue K274 coordinates ATP.

The protein belongs to the class-I aminoacyl-tRNA synthetase family. Monomer. Requires Zn(2+) as cofactor.

Its subcellular location is the cytoplasm. It catalyses the reaction tRNA(Cys) + L-cysteine + ATP = L-cysteinyl-tRNA(Cys) + AMP + diphosphate. The protein is Cysteine--tRNA ligase of Ruegeria pomeroyi (strain ATCC 700808 / DSM 15171 / DSS-3) (Silicibacter pomeroyi).